The primary structure comprises 275 residues: Large ribosomal subunit protein uL2 (275 aa).

Disordered regions lie at residues 36–55 and 223–275; these read PKKR…RHKG and VVMN…RHAR.

The protein belongs to the universal ribosomal protein uL2 family. Part of the 50S ribosomal subunit. Forms a bridge to the 30S subunit in the 70S ribosome.

Functionally, one of the primary rRNA binding proteins. Required for association of the 30S and 50S subunits to form the 70S ribosome, for tRNA binding and peptide bond formation. It has been suggested to have peptidyltransferase activity; this is somewhat controversial. Makes several contacts with the 16S rRNA in the 70S ribosome. The protein is Large ribosomal subunit protein uL2 of Thiobacillus denitrificans (strain ATCC 25259 / T1).